Reading from the N-terminus, the 545-residue chain is MAREPRKNAALDAQSAEDQTGLLTVKVEKEEASALTAEVRAPCSPARGPERSRQRFRGFRYPEAAGPREALSRLRELCGQWLQPEMHSKEQILELLVLEQFLTILPGNLQSWVREQHPESGEEVVVLLEYLERQLDEPAPQVPVGDQGQELLCCKMALLTQTQGSQSSQCQPMKALFKHESLGSQPLHDRVLQVPGLAQGGCCREDAMVASRLTPGSQGLLKMEDVALTLTPGWTQLDSSQVNLYRDEKQENHSSLVSLGGEIQTKSRDLPPVKKLPEKEHGKICHLREDIAQIPTHAEAGEQEGRLQRKQKNAIGSRRHYCHECGKSFAQSSGLTKHRRIHTGEKPYECEDCGKTFIGSSALVIHQRVHTGEKPYECEECGKVFSHSSNLIKHQRTHTGEKPYECDDCGKTFSQSCSLLEHHKIHTGEKPYQCNMCGKAFRRNSHLLRHQRIHGDKNVQNPEHGESWESQGRTESQWENTEAPVSYKCNECERSFTRNRSLIEHQKIHTGEKPYQCDTCGKGFTRTSYLVQHQRSHVGKKTLSQ.

The interval 1–22 (MAREPRKNAALDAQSAEDQTGL) is disordered. Glycyl lysine isopeptide (Lys-Gly) (interchain with G-Cter in SUMO2) cross-links involve residues lysine 26 and lysine 29. The disordered stretch occupies residues 34–55 (ALTAEVRAPCSPARGPERSRQR). The region spanning 53–135 (RQRFRGFRYP…VLLEYLERQL (83 aa)) is the SCAN box domain. Glycyl lysine isopeptide (Lys-Gly) (interchain with G-Cter in SUMO2) cross-links involve residues lysine 178 and lysine 222. In terms of domain architecture, KRAB spans 221–317 (LKMEDVALTL…QRKQKNAIGS (97 aa)). C2H2-type zinc fingers lie at residues 320–342 (HYCHECGKSFAQSSGLTKHRRIH), 348–370 (YECEDCGKTFIGSSALVIHQRVH), 376–398 (YECEECGKVFSHSSNLIKHQRTH), 404–426 (YECDDCGKTFSQSCSLLEHHKIH), and 432–454 (YQCNMCGKAFRRNSHLLRHQRIH). A compositionally biased stretch (basic and acidic residues) spans 455-467 (GDKNVQNPEHGES). A disordered region spans residues 455-480 (GDKNVQNPEHGESWESQGRTESQWEN). Residues 468 to 480 (WESQGRTESQWEN) show a composition bias toward polar residues. C2H2-type zinc fingers lie at residues 487 to 509 (YKCNECERSFTRNRSLIEHQKIH) and 515 to 537 (YQCDTCGKGFTRTSYLVQHQRSH).

This sequence belongs to the krueppel C2H2-type zinc-finger protein family. In terms of tissue distribution, expressed in adult heart, brain, placenta, lung and kidney, but not in adult liver and skeletal muscle. In 17-day old embryo, detected in liver, skeletal muscle, brain, heart and small intestine.

The protein localises to the nucleus. In terms of biological role, may be involved in the transcriptional activation of MDM2 and EP300 genes. The sequence is that of Zinc finger protein with KRAB and SCAN domains 4 (ZKSCAN4) from Homo sapiens (Human).